A 994-amino-acid chain; its full sequence is Bifunctional glutamine synthetase adenylyltransferase/adenylyl-removing enzyme (994 aa).

The adenylyl removase stretch occupies residues 1–487 (MVVTKLATQR…LHTKLFYQPL (487 aa)). Residues 492–994 (GPTGLEIAHG…KAVVRKVFGS (503 aa)) are adenylyl transferase.

It belongs to the GlnE family. Requires Mg(2+) as cofactor.

It catalyses the reaction [glutamine synthetase]-O(4)-(5'-adenylyl)-L-tyrosine + phosphate = [glutamine synthetase]-L-tyrosine + ADP. The enzyme catalyses [glutamine synthetase]-L-tyrosine + ATP = [glutamine synthetase]-O(4)-(5'-adenylyl)-L-tyrosine + diphosphate. In terms of biological role, involved in the regulation of glutamine synthetase GlnA, a key enzyme in the process to assimilate ammonia. When cellular nitrogen levels are high, the C-terminal adenylyl transferase (AT) inactivates GlnA by covalent transfer of an adenylyl group from ATP to specific tyrosine residue of GlnA, thus reducing its activity. Conversely, when nitrogen levels are low, the N-terminal adenylyl removase (AR) activates GlnA by removing the adenylyl group by phosphorolysis, increasing its activity. The regulatory region of GlnE binds the signal transduction protein PII (GlnB) which indicates the nitrogen status of the cell. This chain is Bifunctional glutamine synthetase adenylyltransferase/adenylyl-removing enzyme, found in Mycobacterium bovis (strain ATCC BAA-935 / AF2122/97).